The sequence spans 493 residues: Dipeptidase 3 (493 aa).

The signal sequence occupies residues 1–35 (MQPAGLEGPRALGLRPLGHRLSLLGVLLLVPSLWV). Over residues 41 to 60 (TPSPSSAPTTPEASNATTAP) the composition is skewed to low complexity. Residues 41–74 (TPSPSSAPTTPEASNATTAPGIPNDTATSGVTSD) form a disordered region. 2 disulfides stabilise this stretch: cysteine 143-cysteine 222 and cysteine 294-cysteine 326. N-linked (GlcNAc...) asparagine glycosylation is present at asparagine 331. Serine 462 is lipidated: GPI-anchor amidated serine. Positions 463-493 (KAPPHPLPGLMATLTSLALILWLCCSGHRAV) are cleaved as a propeptide — removed in mature form.

Belongs to the metallo-dependent hydrolases superfamily. Peptidase M19 family. In terms of assembly, homodimer; disulfide-linked. Interacts with TEX101; co-localized on the cell surface of spermatocytes, spermatids, and testicular spermatozoa, co-localized only in cytoplasmic droplets of caput and corpus epididymal sperm. As to expression, expressed in testis but not ovary.

The protein resides in the membrane. Lacks dipeptidase activity and is unable to hydrolyze cystinyl-bis-glycine. The absence of activity may be due to the inability of serine (instead of aspartate found in DPEP1/2) at position 356 to function as the acid/base catalyst and activate the nucleophilic water/hydroxide. Does not hydrolyze leukotriene D4 (LTD4) into leukotriene E4 (LTE4). Does not hydrolyze the beta-lactam antibiotic imipenem. This chain is Dipeptidase 3 (Dpep3), found in Mus musculus (Mouse).